We begin with the raw amino-acid sequence, 931 residues long: Phosphoenolpyruvate carboxylase (931 aa).

Residues His-138 and Lys-594 contribute to the active site.

It belongs to the PEPCase type 1 family. The cofactor is Mg(2+).

The catalysed reaction is oxaloacetate + phosphate = phosphoenolpyruvate + hydrogencarbonate. Forms oxaloacetate, a four-carbon dicarboxylic acid source for the tricarboxylic acid cycle. This is Phosphoenolpyruvate carboxylase from Streptococcus agalactiae serotype Ia (strain ATCC 27591 / A909 / CDC SS700).